The sequence spans 1082 residues: Integrator complex subunit 3 homolog (1082 aa).

Disordered regions lie at residues 483–563 (PGPP…VSDD), 923–945 (YPSNSPNKRKRPSKSAQQNTAPT), and 1005–1082 (DETS…SDSD). Composition is skewed to low complexity over residues 517 to 528 (PAAKAASTAASA) and 542 to 555 (TKPATTTTTTTTTT). The segment covering 936–945 (KSAQQNTAPT) has biased composition (polar residues). Low complexity-rich tracts occupy residues 1008-1018 (STTVGRRGTSS) and 1033-1056 (EKAAAAAAAAHANNSKKAAEASAK).

This sequence belongs to the Integrator subunit 3 family. As to quaternary structure, belongs to the multiprotein complex Integrator. The core complex associates with protein phosphatase 2A subunits, to form the Integrator-PP2A (INTAC) complex.

Its subcellular location is the nucleus. The protein localises to the cytoplasm. Its function is as follows. Component of the integrator complex, a multiprotein complex that terminates RNA polymerase II (Pol II) transcription in the promoter-proximal region of genes. The integrator complex provides a quality checkpoint during transcription elongation by driving premature transcription termination of transcripts that are unfavorably configured for transcriptional elongation: the complex terminates transcription by (1) catalyzing dephosphorylation of the C-terminal domain (CTD) of Pol II subunit Polr2A/Rbp1 and Spt5, and (2) degrading the exiting nascent RNA transcript via endonuclease activity. The integrator complex is also involved in the 3'-end processing of the U7 snRNA, and also the spliceosomal snRNAs U1, U2, U4 and U5. This is Integrator complex subunit 3 homolog from Anopheles gambiae (African malaria mosquito).